The sequence spans 508 residues: Lysine--tRNA ligase (508 aa).

The Mg(2+) site is built by E418 and E425.

Belongs to the class-II aminoacyl-tRNA synthetase family. Homodimer. Mg(2+) is required as a cofactor.

Its subcellular location is the cytoplasm. The catalysed reaction is tRNA(Lys) + L-lysine + ATP = L-lysyl-tRNA(Lys) + AMP + diphosphate. This Burkholderia multivorans (strain ATCC 17616 / 249) protein is Lysine--tRNA ligase.